We begin with the raw amino-acid sequence, 550 residues long: Glucose-6-phosphate isomerase (550 aa).

Glu-356 functions as the Proton donor in the catalytic mechanism. Catalysis depends on residues His-387 and Lys-515.

Belongs to the GPI family.

It localises to the cytoplasm. The enzyme catalyses alpha-D-glucose 6-phosphate = beta-D-fructose 6-phosphate. Its pathway is carbohydrate biosynthesis; gluconeogenesis. The protein operates within carbohydrate degradation; glycolysis; D-glyceraldehyde 3-phosphate and glycerone phosphate from D-glucose: step 2/4. Catalyzes the reversible isomerization of glucose-6-phosphate to fructose-6-phosphate. This Vibrio campbellii (strain ATCC BAA-1116) protein is Glucose-6-phosphate isomerase.